A 483-amino-acid chain; its full sequence is Regulatory protein ViaA (483 aa).

It belongs to the ViaA family. As to quaternary structure, homodimer. Interacts with RavA.

Its subcellular location is the cytoplasm. Functionally, component of the RavA-ViaA chaperone complex, which may act on the membrane to optimize the function of some of the respiratory chains. ViaA stimulates the ATPase activity of RavA. In Shigella dysenteriae serotype 1 (strain Sd197), this protein is Regulatory protein ViaA.